Here is a 359-residue protein sequence, read N- to C-terminus: MAKLTALTLLGLGLALFDGQKSSFQTRFNVHREVTPVELPNCNLVKGIDNGSEDLEILPNGLAFISAGLKYPGIMSFDPDKPGKILLMDLNEKDPVVLELSITGSTFDLSSFNPHGISTFTDEDNIVYLMVVNHPDSKSTVELFKFQEKEKSLLHLKTIRHKLLPSVNDIVAVGPEHFYATNDHYFIDPYLKSWEMHLGLAWSFVTYYSPNDVRVVAEGFDFANGINISPDGKYVYIAELLAHKIHVYEKHANWTLTPLKSLDFNTLVDNISVDPVTGDLWVGCHPNGMRIFYYDPKNPPASEVLRIQDILSKEPKVTVAYAENGTVLQGSTVAAVYKGKMLVGTVFHKALYCELSQAN.

Cysteines 42 and 353 form a disulfide. Residue asparagine 50 is glycosylated (N-linked (GlcNAc...) asparagine). Ca(2+) contacts are provided by glutamate 53 and aspartate 54. The Proton acceptor role is filled by histidine 115. Ca(2+) contacts are provided by isoleucine 117, asparagine 168, aspartate 169, and asparagine 224. An N-linked (GlcNAc...) asparagine glycan is attached at asparagine 253. Ca(2+) is bound by residues aspartate 269 and asparagine 270. Residues asparagine 270 and asparagine 324 are each glycosylated (N-linked (GlcNAc...) asparagine).

Belongs to the paraoxonase family. In terms of assembly, homodimer. Interacts with CLU. The cofactor is Ca(2+). In terms of processing, glycosylated. The signal sequence is not cleaved. As to expression, plasma. Associated with HDL.

It is found in the secreted. Its subcellular location is the extracellular space. It carries out the reaction a phenyl acetate + H2O = a phenol + acetate + H(+). It catalyses the reaction An aryl dialkyl phosphate + H2O = dialkyl phosphate + an aryl alcohol.. The catalysed reaction is an N-acyl-L-homoserine lactone + H2O = an N-acyl-L-homoserine + H(+). Its function is as follows. Hydrolyzes the toxic metabolites of a variety of organophosphorus insecticides. Capable of hydrolyzing a broad spectrum of organophosphate substrates and lactones, and a number of aromatic carboxylic acid esters. Mediates an enzymatic protection of low density lipoproteins against oxidative modification. This is Serum paraoxonase/arylesterase 1 (PON1) from Oryctolagus cuniculus (Rabbit).